A 56-amino-acid polypeptide reads, in one-letter code: Large ribosomal subunit protein bL32 (56 aa).

Positions 1–38 (MAVQQNKKSRSRRDMRRSHDALTTAAVSVDKTSGETHL) are disordered. Basic residues predominate over residues 7–16 (KKSRSRRDMR).

It belongs to the bacterial ribosomal protein bL32 family.

The polypeptide is Large ribosomal subunit protein bL32 (Histophilus somni (strain 129Pt) (Haemophilus somnus)).